The primary structure comprises 126 residues: Prefoldin subunit beta (126 aa).

Belongs to the prefoldin subunit beta family. Heterohexamer of two alpha and four beta subunits.

Its subcellular location is the cytoplasm. Molecular chaperone capable of stabilizing a range of proteins. Seems to fulfill an ATP-independent, HSP70-like function in archaeal de novo protein folding. The chain is Prefoldin subunit beta from Pyrobaculum neutrophilum (strain DSM 2338 / JCM 9278 / NBRC 100436 / V24Sta) (Thermoproteus neutrophilus).